Reading from the N-terminus, the 230-residue chain is Urease accessory protein UreF (230 aa).

It belongs to the UreF family. UreD, UreF and UreG form a complex that acts as a GTP-hydrolysis-dependent molecular chaperone, activating the urease apoprotein by helping to assemble the nickel containing metallocenter of UreC. The UreE protein probably delivers the nickel.

Its subcellular location is the cytoplasm. Its function is as follows. Required for maturation of urease via the functional incorporation of the urease nickel metallocenter. This chain is Urease accessory protein UreF, found in Cupriavidus necator (strain ATCC 17699 / DSM 428 / KCTC 22496 / NCIMB 10442 / H16 / Stanier 337) (Ralstonia eutropha).